Reading from the N-terminus, the 142-residue chain is Ribosome maturation factor RimP (142 aa).

This sequence belongs to the RimP family.

Its subcellular location is the cytoplasm. In terms of biological role, required for maturation of 30S ribosomal subunits. This chain is Ribosome maturation factor RimP, found in Nitratiruptor sp. (strain SB155-2).